We begin with the raw amino-acid sequence, 317 residues long: Porphobilinogen deaminase (317 aa).

Cys245 bears the S-(dipyrrolylmethanemethyl)cysteine mark.

The protein belongs to the HMBS family. In terms of assembly, monomer. Dipyrromethane is required as a cofactor.

The enzyme catalyses 4 porphobilinogen + H2O = hydroxymethylbilane + 4 NH4(+). The protein operates within porphyrin-containing compound metabolism; protoporphyrin-IX biosynthesis; coproporphyrinogen-III from 5-aminolevulinate: step 2/4. It functions in the pathway porphyrin-containing compound metabolism; chlorophyll biosynthesis. Tetrapolymerization of the monopyrrole PBG into the hydroxymethylbilane pre-uroporphyrinogen in several discrete steps. The protein is Porphobilinogen deaminase of Prochlorococcus marinus (strain MIT 9303).